A 323-amino-acid chain; its full sequence is Glutamyl-Q tRNA(Asp) synthetase (323 aa).

Residues 5–9 (RFAPT) and E41 each bind L-glutamate. The short motif at 8–18 (PTPSGALHLGN) is the 'HIGH' region element. 4 residues coordinate Zn(2+): C105, C107, Y129, and C133. Residues Y193 and R211 each contribute to the L-glutamate site. A 'KMSKS' region motif is present at residues 249–253 (RLAKR). K252 provides a ligand contact to ATP.

The protein belongs to the class-I aminoacyl-tRNA synthetase family. GluQ subfamily. It depends on Zn(2+) as a cofactor.

Its function is as follows. Catalyzes the tRNA-independent activation of glutamate in presence of ATP and the subsequent transfer of glutamate onto a tRNA(Asp). Glutamate is transferred on the 2-amino-5-(4,5-dihydroxy-2-cyclopenten-1-yl) moiety of the queuosine in the wobble position of the QUC anticodon. The chain is Glutamyl-Q tRNA(Asp) synthetase from Symbiobacterium thermophilum (strain DSM 24528 / JCM 14929 / IAM 14863 / T).